Reading from the N-terminus, the 1704-residue chain is Type-2 histone deacetylase 2 (1704 aa).

Disordered regions lie at residues 1-303 (MSTN…SEER), 315-383 (TQGS…TSKK), and 540-634 (QFLQ…IGNS). Positions 15–69 (TTITNESNTDNNNNNNDDNKNNTENTTSPTNNNNTNDNDNNSDNNNNKNNNNNNS) are enriched in low complexity. The span at 70-81 (QVTEEQQVTLED) shows a compositional bias: polar residues. The span at 97–113 (DSAEEDEDEMEDDDEDA) shows a compositional bias: acidic residues. Residues 134-153 (KVQQSTNTHLSQTTPESPTI) show a composition bias toward polar residues. A compositionally biased stretch (low complexity) spans 165–176 (STSTNNTPNTQS). Positions 186-195 (LTSDEEKDLM) are enriched in basic and acidic residues. The segment covering 196–210 (LSEESDGGVGEDDDS) has biased composition (acidic residues). Residues 222-286 (NQSNQNQNNN…SNNDNNNNNN (65 aa)) are compositionally biased toward low complexity. Residues 315-325 (TQGSSTTTSDP) are compositionally biased toward polar residues. Over residues 326 to 351 (NNQNNQINQINQNNQNNQNNQNNQNN) the composition is skewed to low complexity. Over residues 354–369 (GEEEFGEEFEEEEEDM) the composition is skewed to acidic residues. Over residues 372-382 (PKKKTKYKTSK) the composition is skewed to basic residues. Composition is skewed to low complexity over residues 540 to 549 (QFLQQQQQQQ) and 561 to 580 (NSNN…NNNS). The segment covering 608 to 620 (YETRKYTKKRNDE) has biased composition (basic and acidic residues). Positions 1165 and 1227 each coordinate substrate. A divalent metal cation is bound by residues Asp-1256, His-1258, and Asp-1350. Residues 1485 to 1704 (QLERQKQLQQ…TPQNINNSDN (220 aa)) form a disordered region. Residues 1491–1616 (QLQQQQQQAQ…NNSNNNNNMN (126 aa)) show a composition bias toward low complexity. Over residues 1649-1669 (LSPNSVNRGNNPSNISMSGAQ) the composition is skewed to polar residues. The span at 1677 to 1698 (SPKPSNSPNSPSTSNNNGTPQN) shows a compositional bias: low complexity.

This sequence belongs to the histone deacetylase family. HD type 2 subfamily.

The protein localises to the nucleus. Its subcellular location is the cytoplasm. The catalysed reaction is N(6)-acetyl-L-lysyl-[histone] + H2O = L-lysyl-[histone] + acetate. Responsible for the deacetylation of lysine residues on the N-terminal part of the core histones (H2A, H2B, H3 and H4). Histone deacetylation plays an important role in transcriptional regulation, cell cycle progression and developmental events. Histone deacetylases act via the formation of large multiprotein complexes. The protein is Type-2 histone deacetylase 2 (hdaC) of Dictyostelium discoideum (Social amoeba).